The chain runs to 520 residues: Amphoterin-induced protein 2 (520 aa).

An N-terminal signal peptide occupies residues methionine 1–serine 37. An LRRNT domain is found at glycine 38 to arginine 67. At glycine 38–threonine 398 the chain is on the extracellular side. 2 cysteine pairs are disulfide-bonded: cysteine 40–cysteine 46 and cysteine 44–cysteine 53. N-linked (GlcNAc...) asparagine glycosylation is present at asparagine 57. LRR repeat units lie at residues leucine 68–valine 89, lysine 93–threonine 114, asparagine 117–glutamate 138, valine 141–glycine 162, histidine 165–glycine 186, and aspartate 192–leucine 213. A glycan (N-linked (GlcNAc...) asparagine) is linked at asparagine 103. The region spanning asparagine 227–histidine 283 is the LRRCT domain. Cystine bridges form between cysteine 231/cysteine 259 and cysteine 233/cysteine 281. N-linked (GlcNAc...) asparagine glycans are attached at residues asparagine 280, asparagine 287, asparagine 344, asparagine 372, asparagine 380, asparagine 383, and asparagine 387. The Ig-like C2-type domain maps to glycine 288–methionine 378. Cysteine 309 and cysteine 362 are oxidised to a cystine. A helical membrane pass occupies residues alanine 399 to leucine 419. Topologically, residues threonine 420 to threonine 520 are cytoplasmic. Disordered regions lie at residues glutamine 437–arginine 458 and serine 498–threonine 520.

It belongs to the immunoglobulin superfamily. AMIGO family. Binds itself as well as AMIGO1 and AMIGO3. Highest levels in the lung. High levels in cerebellar granule neurons and Purkinje cells. Also in pyramidal cells between CA1 and CA3 regions of the hippocampus and granule cells of the dentate gyrus.

Its subcellular location is the cell membrane. The protein localises to the nucleus. Required for depolarization-dependent survival of cultured cerebellar granule neurons. May mediate homophilic as well as heterophilic cell-cell interaction with AMIGO1 or AMIGO3. May contribute to signal transduction through its intracellular domain. This chain is Amphoterin-induced protein 2, found in Rattus norvegicus (Rat).